The primary structure comprises 304 residues: Ribosomal RNA small subunit methyltransferase H (304 aa).

S-adenosyl-L-methionine-binding positions include glycine 36–histidine 38, aspartate 53, phenylalanine 79, aspartate 98, and glutamine 105.

Belongs to the methyltransferase superfamily. RsmH family.

It is found in the cytoplasm. It carries out the reaction cytidine(1402) in 16S rRNA + S-adenosyl-L-methionine = N(4)-methylcytidine(1402) in 16S rRNA + S-adenosyl-L-homocysteine + H(+). In terms of biological role, specifically methylates the N4 position of cytidine in position 1402 (C1402) of 16S rRNA. The polypeptide is Ribosomal RNA small subunit methyltransferase H (Myxococcus xanthus (strain DK1622)).